The following is a 144-amino-acid chain: Putative 2'-deoxynucleoside 5'-phosphate N-hydrolase 1 (144 aa).

Substrate-binding positions include 7–13 (YFCGSIR), tyrosine 22, histidine 39, glutamate 83, and 107–109 (SGM).

The protein belongs to the 2'-deoxynucleoside 5'-phosphate N-hydrolase 1 family. In terms of assembly, monomer and homodimer.

The protein resides in the cytoplasm. It is found in the nucleus. The enzyme catalyses a pyrimidine 2'-deoxyribonucleoside 5'-phosphate + H2O = a pyrimidine nucleobase + 2-deoxy-D-ribose 5-phosphate. It catalyses the reaction a purine 2'-deoxyribonucleoside 5'-phosphate + H2O = a purine nucleobase + 2-deoxy-D-ribose 5-phosphate. Catalyzes the cleavage of the N-glycosidic bond of deoxyribonucleoside 5'-monophosphates to yield deoxyribose 5-phosphate and a purine or pyrimidine base. This chain is Putative 2'-deoxynucleoside 5'-phosphate N-hydrolase 1, found in Trichoplax adhaerens (Trichoplax reptans).